Reading from the N-terminus, the 230-residue chain is Demethylmenaquinone methyltransferase (230 aa).

S-adenosyl-L-methionine is bound by residues T62, D80, 100–101 (DG), and S117.

It belongs to the class I-like SAM-binding methyltransferase superfamily. MenG/UbiE family.

It carries out the reaction a 2-demethylmenaquinol + S-adenosyl-L-methionine = a menaquinol + S-adenosyl-L-homocysteine + H(+). It functions in the pathway quinol/quinone metabolism; menaquinone biosynthesis; menaquinol from 1,4-dihydroxy-2-naphthoate: step 2/2. Methyltransferase required for the conversion of demethylmenaquinol (DMKH2) to menaquinol (MKH2). The sequence is that of Demethylmenaquinone methyltransferase from Corynebacterium glutamicum (strain R).